We begin with the raw amino-acid sequence, 902 residues long: 3'-5' exonuclease DinG (902 aa).

Residues 8-161 form the Exonuclease domain; it reads VVDLETTGNQ…DEDATTTAKL (154 aa). The 256-residue stretch at 241-496 folds into the Helicase ATP-binding domain; the sequence is KNVTQSLNLT…KAVDKLEQQR (256 aa). 276-283 is a binding site for ATP; it reads APLGSGKS. The DEAH box motif lies at 448–451; that stretch reads DEAH. Residues 714–883 enclose the Helicase C-terminal domain; that stretch reads YIVEYITVTQ…HFKQRKGNIK (170 aa).

The protein belongs to the helicase family. DinG subfamily. Type 2 sub-subfamily.

3'-5' exonuclease. This chain is 3'-5' exonuclease DinG, found in Staphylococcus epidermidis (strain ATCC 35984 / DSM 28319 / BCRC 17069 / CCUG 31568 / BM 3577 / RP62A).